A 369-amino-acid chain; its full sequence is Chaperone protein DnaJ (369 aa).

The region spanning D7 to G73 is the J domain. The CR-type zinc finger occupies G143–K225. Zn(2+) contacts are provided by C156, C159, C173, C176, C199, C202, C213, and C216. CXXCXGXG motif repeat units follow at residues C156–G163, C173–G180, C199–G206, and C213–G220.

It belongs to the DnaJ family. As to quaternary structure, homodimer. Zn(2+) is required as a cofactor.

It is found in the cytoplasm. In terms of biological role, participates actively in the response to hyperosmotic and heat shock by preventing the aggregation of stress-denatured proteins and by disaggregating proteins, also in an autonomous, DnaK-independent fashion. Unfolded proteins bind initially to DnaJ; upon interaction with the DnaJ-bound protein, DnaK hydrolyzes its bound ATP, resulting in the formation of a stable complex. GrpE releases ADP from DnaK; ATP binding to DnaK triggers the release of the substrate protein, thus completing the reaction cycle. Several rounds of ATP-dependent interactions between DnaJ, DnaK and GrpE are required for fully efficient folding. Also involved, together with DnaK and GrpE, in the DNA replication of plasmids through activation of initiation proteins. The protein is Chaperone protein DnaJ of Thermotoga maritima (strain ATCC 43589 / DSM 3109 / JCM 10099 / NBRC 100826 / MSB8).